We begin with the raw amino-acid sequence, 451 residues long: Tubulin alpha-2 chain (451 aa).

Position 11 (Gln-11) interacts with GTP. Lys-40 carries the post-translational modification N6-acetyllysine. Glu-71, Gly-144, Thr-145, Thr-179, Asn-206, and Asn-228 together coordinate GTP. Glu-71 is a binding site for Mg(2+). Glu-254 is a catalytic residue.

This sequence belongs to the tubulin family. Dimer of alpha and beta chains. A typical microtubule is a hollow water-filled tube with an outer diameter of 25 nm and an inner diameter of 15 nM. Alpha-beta heterodimers associate head-to-tail to form protofilaments running lengthwise along the microtubule wall with the beta-tubulin subunit facing the microtubule plus end conferring a structural polarity. Microtubules usually have 13 protofilaments but different protofilament numbers can be found in some organisms and specialized cells. Mg(2+) serves as cofactor. Post-translationally, undergoes a tyrosination/detyrosination cycle, the cyclic removal and re-addition of a C-terminal tyrosine residue by the enzymes tubulin tyrosine carboxypeptidase (TTCP) and tubulin tyrosine ligase (TTL), respectively. Acetylation of alpha chains at Lys-40 stabilizes microtubules and affects affinity and processivity of microtubule motors. This modification has a role in multiple cellular functions, ranging from cell motility, cell cycle progression or cell differentiation to intracellular trafficking and signaling.

It is found in the cytoplasm. The protein resides in the cytoskeleton. It carries out the reaction GTP + H2O = GDP + phosphate + H(+). Tubulin is the major constituent of microtubules, a cylinder consisting of laterally associated linear protofilaments composed of alpha- and beta-tubulin heterodimers. Microtubules grow by the addition of GTP-tubulin dimers to the microtubule end, where a stabilizing cap forms. Below the cap, tubulin dimers are in GDP-bound state, owing to GTPase activity of alpha-tubulin. The chain is Tubulin alpha-2 chain (TUBA) from Oryza sativa subsp. japonica (Rice).